The following is a 290-amino-acid chain: Bifunctional protein FolD 1 (290 aa).

Residues 164–166 (GRS), Ile193, and Ile236 contribute to the NADP(+) site.

This sequence belongs to the tetrahydrofolate dehydrogenase/cyclohydrolase family. As to quaternary structure, homodimer.

It catalyses the reaction (6R)-5,10-methylene-5,6,7,8-tetrahydrofolate + NADP(+) = (6R)-5,10-methenyltetrahydrofolate + NADPH. It carries out the reaction (6R)-5,10-methenyltetrahydrofolate + H2O = (6R)-10-formyltetrahydrofolate + H(+). The protein operates within one-carbon metabolism; tetrahydrofolate interconversion. Its function is as follows. Catalyzes the oxidation of 5,10-methylenetetrahydrofolate to 5,10-methenyltetrahydrofolate and then the hydrolysis of 5,10-methenyltetrahydrofolate to 10-formyltetrahydrofolate. This is Bifunctional protein FolD 1 from Geobacter metallireducens (strain ATCC 53774 / DSM 7210 / GS-15).